We begin with the raw amino-acid sequence, 255 residues long: 4-diphosphocytidyl-2-C-methyl-D-erythritol kinase (255 aa).

The active site involves K6. Position 95–105 (95–105) interacts with ATP; sequence PVCAGLGGGSS. The active site involves D137.

It belongs to the GHMP kinase family. IspE subfamily.

It carries out the reaction 4-CDP-2-C-methyl-D-erythritol + ATP = 4-CDP-2-C-methyl-D-erythritol 2-phosphate + ADP + H(+). It participates in isoprenoid biosynthesis; isopentenyl diphosphate biosynthesis via DXP pathway; isopentenyl diphosphate from 1-deoxy-D-xylulose 5-phosphate: step 3/6. Catalyzes the phosphorylation of the position 2 hydroxy group of 4-diphosphocytidyl-2C-methyl-D-erythritol. The sequence is that of 4-diphosphocytidyl-2-C-methyl-D-erythritol kinase from Campylobacter jejuni subsp. doylei (strain ATCC BAA-1458 / RM4099 / 269.97).